Here is a 325-residue protein sequence, read N- to C-terminus: GMP reductase (325 aa).

Residue Cys-174 is the Thioimidate intermediate of the active site. 203–226 provides a ligand contact to NADP(+); it reads LIADGGIRTHGDIAKSIRFGASMV.

Belongs to the IMPDH/GMPR family. GuaC type 2 subfamily.

The catalysed reaction is IMP + NH4(+) + NADP(+) = GMP + NADPH + 2 H(+). In terms of biological role, catalyzes the irreversible NADPH-dependent deamination of GMP to IMP. It functions in the conversion of nucleobase, nucleoside and nucleotide derivatives of G to A nucleotides, and in maintaining the intracellular balance of A and G nucleotides. The sequence is that of GMP reductase from Staphylococcus aureus (strain bovine RF122 / ET3-1).